We begin with the raw amino-acid sequence, 1176 residues long: DNA-directed RNA polymerase subunit beta (1176 aa).

Positions 13 to 30 are enriched in polar residues; sequence TDASLHQGRPQSSSNSSV. Residues 13-35 are disordered; that stretch reads TDASLHQGRPQSSSNSSVPGAPN.

The protein belongs to the RNA polymerase beta chain family. The RNAP catalytic core consists of 2 alpha, 1 beta, 1 beta' and 1 omega subunit. When a sigma factor is associated with the core the holoenzyme is formed, which can initiate transcription.

The catalysed reaction is RNA(n) + a ribonucleoside 5'-triphosphate = RNA(n+1) + diphosphate. Functionally, DNA-dependent RNA polymerase catalyzes the transcription of DNA into RNA using the four ribonucleoside triphosphates as substrates. The sequence is that of DNA-directed RNA polymerase subunit beta from Mycobacterium marinum (strain ATCC BAA-535 / M).